Here is a 356-residue protein sequence, read N- to C-terminus: GTPase Obg (356 aa).

Residues 1–159 enclose the Obg domain; the sequence is MKFLDEAKVY…RWIWLRMKLI (159 aa). One can recognise an OBG-type G domain in the interval 160-327; sequence ADAGLVGLPN…VLRALTDVIS (168 aa). GTP is bound by residues 166 to 173, 191 to 195, 212 to 215, 279 to 282, and 308 to 310; these read GLPNAGKS, FTTLH, DIPG, NKID, and SGV. Mg(2+) contacts are provided by S173 and T193. Residues 329–356 form a disordered region; that stretch reads APVSTKAKGEPTENETPPPSTGWSPLSN.

This sequence belongs to the TRAFAC class OBG-HflX-like GTPase superfamily. OBG GTPase family. Monomer. Mg(2+) is required as a cofactor.

Its subcellular location is the cytoplasm. Functionally, an essential GTPase which binds GTP, GDP and possibly (p)ppGpp with moderate affinity, with high nucleotide exchange rates and a fairly low GTP hydrolysis rate. Plays a role in control of the cell cycle, stress response, ribosome biogenesis and in those bacteria that undergo differentiation, in morphogenesis control. The chain is GTPase Obg from Afipia carboxidovorans (strain ATCC 49405 / DSM 1227 / KCTC 32145 / OM5) (Oligotropha carboxidovorans).